Here is a 315-residue protein sequence, read N- to C-terminus: Methionyl-tRNA formyltransferase (315 aa).

(6S)-5,6,7,8-tetrahydrofolate is bound at residue 110 to 113 (SLLP).

Belongs to the Fmt family.

It carries out the reaction L-methionyl-tRNA(fMet) + (6R)-10-formyltetrahydrofolate = N-formyl-L-methionyl-tRNA(fMet) + (6S)-5,6,7,8-tetrahydrofolate + H(+). In terms of biological role, attaches a formyl group to the free amino group of methionyl-tRNA(fMet). The formyl group appears to play a dual role in the initiator identity of N-formylmethionyl-tRNA by promoting its recognition by IF2 and preventing the misappropriation of this tRNA by the elongation apparatus. In Mycolicibacterium paratuberculosis (strain ATCC BAA-968 / K-10) (Mycobacterium paratuberculosis), this protein is Methionyl-tRNA formyltransferase.